The primary structure comprises 221 residues: Protein Pisl_1005 (221 aa).

An AMMECR1 domain is found at Glu-8–Glu-201.

This chain is Protein Pisl_1005, found in Pyrobaculum islandicum (strain DSM 4184 / JCM 9189 / GEO3).